The chain runs to 232 residues: Putative homeobox protein NANOG2 (232 aa).

The disordered stretch occupies residues 1 to 39; that stretch reads MDLPIQDSHDSSTSPKGKQPTTAEKSATKKEDKVPVKKQ. Polar residues predominate over residues 11–25; that stretch reads SSTSPKGKQPTTAEK. Positions 26–35 are enriched in basic and acidic residues; it reads SATKKEDKVP. Tandem repeats lie at residues 123-127, 128-132, 133-137, 143-147, 148-152, 153-157, 158-162, and 163-167. The segment at 123-167 is 8 X repeats starting with a Trp in each unit; sequence WSNQTWNNSTWSNQTQNIQSWSNHSWNTQTWCTQSWNNQAWNSPF. Residues 123–167 form a sufficient for transactivation activity region; it reads WSNQTWNNSTWSNQTQNIQSWSNHSWNTQTWCTQSWNNQAWNSPF. A sufficient for strong transactivation activity region spans residues 168–232; sequence YNCGEESLQS…YSTNMXXEDV (65 aa).

The protein belongs to the Nanog homeobox family.

It is found in the nucleus. Its function is as follows. Probable transcriptional regulator. The chain is Putative homeobox protein NANOG2 (NANOGP1) from Pan paniscus (Pygmy chimpanzee).